We begin with the raw amino-acid sequence, 233 residues long: Zinc import ATP-binding protein ZnuC (233 aa).

Positions 6 to 222 (IEFHNVSKKF…SDFSNALSSL (217 aa)) constitute an ABC transporter domain. 38–45 (GPNGAGKT) lines the ATP pocket.

This sequence belongs to the ABC transporter superfamily. Zinc importer (TC 3.A.1.15.5) family. In terms of assembly, the complex is composed of two ATP-binding proteins (ZnuC), two transmembrane proteins (ZnuB) and a solute-binding protein (ZnuA).

The protein resides in the cell inner membrane. It catalyses the reaction Zn(2+)(out) + ATP(in) + H2O(in) = Zn(2+)(in) + ADP(in) + phosphate(in) + H(+)(in). Part of the ABC transporter complex ZnuABC involved in zinc import. Responsible for energy coupling to the transport system. This chain is Zinc import ATP-binding protein ZnuC, found in Rickettsia bellii (strain RML369-C).